We begin with the raw amino-acid sequence, 302 residues long: Rab effector Noc2 (302 aa).

The 118-residue stretch at 41–158 (QRRSQCLSPG…KRSGAWFYKG (118 aa)) folds into the RabBD domain. The FYVE-type zinc-finger motif lies at 89-146 (GNGLSQCLLCGEVLGFLGSSSVFCKDCRKKVCTKCGIEASPGQKRPLWLCKICSEQRE). C95, C98, C112, C115, C120, C123, C138, and C141 together coordinate Zn(2+). The interval 174-302 (DPHFRPLPVE…KRHTWATPRY (129 aa)) is disordered. Polar residues predominate over residues 185–197 (TETQPPSAETSRV). The residue at position 248 (S248) is a Phosphoserine. Residues 258 to 269 (SHLSGSQSSLGS) are compositionally biased toward low complexity.

In terms of assembly, recruited to dense-core vesicles through specific interaction with RAB27A in endocrine cells. Interacts with RAB3A, RAB3B, RAB3C and RAB3D. Interacts with ZYX. As to expression, highly expressed in pancreatic islets. High to moderate expression in adrenal gland, pituitary gland and ovary.

It localises to the cytoplasm. The protein localises to the cytoplasmic vesicle. The protein resides in the secretory vesicle membrane. In terms of biological role, rab GTPase effector involved in the late steps of regulated exocytosis, both in endocrine and exocrine cells. Regulates the exocytosis of dense-core vesicles in neuroendocrine cells through interaction with RAB27A. Acts as a potential RAB3B effector protein in epithelial cells. The protein is Rab effector Noc2 (Rph3al) of Mus musculus (Mouse).